We begin with the raw amino-acid sequence, 252 residues long: Ribosomal RNA small subunit methyltransferase J (252 aa).

S-adenosyl-L-methionine-binding positions include 101–102, 117–118, 153–154, and Asp171; these read RD, ER, and SS.

Belongs to the methyltransferase superfamily. RsmJ family.

It localises to the cytoplasm. The catalysed reaction is guanosine(1516) in 16S rRNA + S-adenosyl-L-methionine = N(2)-methylguanosine(1516) in 16S rRNA + S-adenosyl-L-homocysteine + H(+). Its function is as follows. Specifically methylates the guanosine in position 1516 of 16S rRNA. In Salmonella heidelberg (strain SL476), this protein is Ribosomal RNA small subunit methyltransferase J.